The primary structure comprises 74 residues: MLVFYAILFVTVFSNTVMGATIDKPIPKPIFREAIEEMEVNKRAKNPYCKEEKCPVGKHCPKKPIVCRIGPCCV.

A signal peptide spans 1–19 (MLVFYAILFVTVFSNTVMG). Positions 20-41 (ATIDKPIPKPIFREAIEEMEVN) are excised as a propeptide.

This sequence belongs to the scoloptoxin-07 family. Post-translationally, contains 3 disulfide bonds. Expressed by the venom gland.

It localises to the secreted. In terms of biological role, inhibits voltage-gated potassium channels. This chain is Kappa-scoloptoxin(07)-Ssm2f, found in Scolopendra mutilans (Chinese red-headed centipede).